A 401-amino-acid polypeptide reads, in one-letter code: Deubiquitinase and deneddylase Dub1 (401 aa).

Polar residues predominate over residues 1–11 (MLSPTNSTSKT). The tract at residues 1–24 (MLSPTNSTSKTAPVPPRDSSKPVL) is disordered. The chain crosses the membrane as a helical span at residues 40-60 (TALAVLLVVVTLGLILLFYSF). A disordered region spans residues 77–130 (KEQPTISIPVPLPSPPLAVPRPSTPPPPVISRPSTPSAPKPSTPPPLLPKAPKP). Over residues 86–128 (VPLPSPPLAVPRPSTPPPPVISRPSTPSAPKPSTPPPLLPKAP) the composition is skewed to pro residues. Active-site residues include histidine 275, aspartate 292, and cysteine 345.

It belongs to the peptidase C48 family. As to quaternary structure, binds to host NFKBIA.

The protein resides in the secreted. It is found in the host cell. Its subcellular location is the membrane. Effector proteins function to alter host cell physiology and promote bacterial survival in host tissues. This protease possesses deubiquitinating and deneddylating activities. Impairs ubiquitination and degradation of NF-kappa-B inhibitor alpha (NFKBIA), thereby preventing NF-kappa-B activation. This Chlamydia trachomatis serovar L2 (strain ATCC VR-902B / DSM 19102 / 434/Bu) protein is Deubiquitinase and deneddylase Dub1 (cdu1).